A 198-amino-acid chain; its full sequence is Holliday junction branch migration complex subunit RuvA (198 aa).

The domain I stretch occupies residues 1 to 63 (MYDYIKGQLT…EDAHLLFGFH (63 aa)). A domain II region spans residues 64-142 (TEDEKDVFLK…EAPQETGHTK (79 aa)). The tract at residues 143–147 (ARSNK) is flexible linker. The segment at 148-198 (AGNTQLDEAIEALLALGYKAKELKKIRAFFEETSETAEQYIKSALKLLMKG) is domain III.

It belongs to the RuvA family. Homotetramer. Forms an RuvA(8)-RuvB(12)-Holliday junction (HJ) complex. HJ DNA is sandwiched between 2 RuvA tetramers; dsDNA enters through RuvA and exits via RuvB. An RuvB hexamer assembles on each DNA strand where it exits the tetramer. Each RuvB hexamer is contacted by two RuvA subunits (via domain III) on 2 adjacent RuvB subunits; this complex drives branch migration. In the full resolvosome a probable DNA-RuvA(4)-RuvB(12)-RuvC(2) complex forms which resolves the HJ.

It is found in the cytoplasm. Its function is as follows. The RuvA-RuvB-RuvC complex processes Holliday junction (HJ) DNA during genetic recombination and DNA repair, while the RuvA-RuvB complex plays an important role in the rescue of blocked DNA replication forks via replication fork reversal (RFR). RuvA specifically binds to HJ cruciform DNA, conferring on it an open structure. The RuvB hexamer acts as an ATP-dependent pump, pulling dsDNA into and through the RuvAB complex. HJ branch migration allows RuvC to scan DNA until it finds its consensus sequence, where it cleaves and resolves the cruciform DNA. This Streptococcus pyogenes serotype M2 (strain MGAS10270) protein is Holliday junction branch migration complex subunit RuvA.